A 48-amino-acid chain; its full sequence is DNA-directed RNA polymerase subunit Rpo12 (48 aa).

Residues cysteine 9, cysteine 26, and cysteine 29 each coordinate Zn(2+).

It belongs to the archaeal Rpo12/eukaryotic RPC10 RNA polymerase subunit family. Part of the RNA polymerase complex. Zn(2+) is required as a cofactor.

It localises to the cytoplasm. It catalyses the reaction RNA(n) + a ribonucleoside 5'-triphosphate = RNA(n+1) + diphosphate. In terms of biological role, DNA-dependent RNA polymerase (RNAP) catalyzes the transcription of DNA into RNA using the four ribonucleoside triphosphates as substrates. The chain is DNA-directed RNA polymerase subunit Rpo12 from Saccharolobus islandicus (strain Y.N.15.51 / Yellowstone #2) (Sulfolobus islandicus).